Consider the following 344-residue polypeptide: Protein-glutamate methylesterase/protein-glutamine glutaminase 1 (344 aa).

Residues 5–122 (RVLVVDDSAT…GTQEALAEIV (118 aa)) enclose the Response regulatory domain. Position 56 is a 4-aspartylphosphate (D56). The CheB-type methylesterase domain occupies 151 to 343 (FMPSGDIVAI…QSILDLASAR (193 aa)). Residues S163, H189, and D285 contribute to the active site.

This sequence belongs to the CheB family. Phosphorylated by CheA. Phosphorylation of the N-terminal regulatory domain activates the methylesterase activity.

It localises to the cytoplasm. It catalyses the reaction [protein]-L-glutamate 5-O-methyl ester + H2O = L-glutamyl-[protein] + methanol + H(+). It carries out the reaction L-glutaminyl-[protein] + H2O = L-glutamyl-[protein] + NH4(+). Functionally, involved in chemotaxis. Part of a chemotaxis signal transduction system that modulates chemotaxis in response to various stimuli. Catalyzes the demethylation of specific methylglutamate residues introduced into the chemoreceptors (methyl-accepting chemotaxis proteins or MCP) by CheR. Also mediates the irreversible deamidation of specific glutamine residues to glutamic acid. The polypeptide is Protein-glutamate methylesterase/protein-glutamine glutaminase 1 (Caulobacter vibrioides (strain ATCC 19089 / CIP 103742 / CB 15) (Caulobacter crescentus)).